Consider the following 308-residue polypeptide: Zinc-binding protein TroA (308 aa).

The N-terminal stretch at 1–22 (MIRERICACVLALGMLTGFTHA) is a signal peptide. His-68, His-133, His-199, and Asp-279 together coordinate Zn(2+).

This sequence belongs to the bacterial solute-binding protein 9 family. Monomer.

It is found in the periplasm. Functionally, part of the ATP-binding cassette (ABC) transport system TroABC involved in zinc import. Binds zinc with high affinity and specificity and delivers it to the membrane permease for translocation into the cytoplasm. In Treponema pallidum (strain Nichols), this protein is Zinc-binding protein TroA (troA).